Consider the following 211-residue polypeptide: Holliday junction resolvase RecU (211 aa).

Mg(2+)-binding residues include Thr87, Asp89, Asp102, and Gln121.

It belongs to the RecU family. Mg(2+) is required as a cofactor.

Its subcellular location is the cytoplasm. It carries out the reaction Endonucleolytic cleavage at a junction such as a reciprocal single-stranded crossover between two homologous DNA duplexes (Holliday junction).. Endonuclease that resolves Holliday junction intermediates in genetic recombination. Cleaves mobile four-strand junctions by introducing symmetrical nicks in paired strands. Promotes annealing of linear ssDNA with homologous dsDNA. Required for DNA repair, homologous recombination and chromosome segregation. In Limosilactobacillus fermentum (strain NBRC 3956 / LMG 18251) (Lactobacillus fermentum), this protein is Holliday junction resolvase RecU.